Consider the following 629-residue polypeptide: Phosphomethylpyrimidine synthase (629 aa).

Positions 1-20 (MSTTLKNAAHLSESAQVDSG) are disordered. Substrate-binding positions include Asn233, Met262, Tyr291, His327, 347–349 (SRG), 388–391 (DGLR), and Glu427. His431 is a binding site for Zn(2+). Tyr454 provides a ligand contact to substrate. His495 provides a ligand contact to Zn(2+). Cys575, Cys578, and Cys583 together coordinate [4Fe-4S] cluster.

It belongs to the ThiC family. In terms of assembly, homodimer. Requires [4Fe-4S] cluster as cofactor.

It catalyses the reaction 5-amino-1-(5-phospho-beta-D-ribosyl)imidazole + S-adenosyl-L-methionine = 4-amino-2-methyl-5-(phosphooxymethyl)pyrimidine + CO + 5'-deoxyadenosine + formate + L-methionine + 3 H(+). It participates in cofactor biosynthesis; thiamine diphosphate biosynthesis. In terms of biological role, catalyzes the synthesis of the hydroxymethylpyrimidine phosphate (HMP-P) moiety of thiamine from aminoimidazole ribotide (AIR) in a radical S-adenosyl-L-methionine (SAM)-dependent reaction. This is Phosphomethylpyrimidine synthase from Pseudomonas savastanoi pv. phaseolicola (strain 1448A / Race 6) (Pseudomonas syringae pv. phaseolicola (strain 1448A / Race 6)).